Here is a 476-residue protein sequence, read N- to C-terminus: Protein transport protein Sec61 subunit alpha (476 aa).

Residues 2-33 (GIKFLEVIKPFCAVLPEIQKPERKIQFREKVL) are Cytoplasmic-facing. A helical transmembrane segment spans residues 34–53 (WTAITLFIFLVCCQIPLFGI). At 54–76 (MSSDSADPFYWMRVILASNRGTL) the chain is on the lumenal side. Residues 77–96 (MELGISPIVTSGLIMQLLAG) traverse the membrane as a helical segment. Residues 97–117 (AKIIEVGDTPKDRALFNGAQK) lie on the Cytoplasmic side of the membrane. Residues 118-138 (LFGMIITIGQAIVYVMTGMYG) form a helical membrane-spanning segment. Topologically, residues 139–144 (DPSEMG) are lumenal. A helical transmembrane segment spans residues 145–165 (AGICLVIIIQLFVAGLIVLLL). Residues 166–172 (DELLQKG) lie on the Cytoplasmic side of the membrane. A helical transmembrane segment spans residues 173 to 193 (YGLGSGISLFIATNICETIVW). Residues 194–240 (KAFSPTTVNTGRGTEFEGAIIALFHLLATRTDKVRALREAFYRQNLP) lie on the Lumenal side of the membrane. Residues 241–261 (NLMNLIATVFVFAVVIYFQGF) traverse the membrane as a helical segment. The Cytoplasmic portion of the chain corresponds to 262–288 (RVDLPIKSARYRGQYNTYPIKLFYTSN). A helical membrane pass occupies residues 289 to 309 (IPIILQSALVSNLYVISQMLS). Topologically, residues 310 to 354 (TRFSGNFLVNLLGTWSDTSTGGPARAYPVGGLCYYFSPPESFGSV) are lumenal. The helical transmembrane segment at 355–375 (LDDPVHASIYIVFMLGSCAFF) threads the bilayer. Residues 376–420 (SKTWIEVSGSSAKDVAKQLKEQQMVMRGHRETSMVHELNRYIPTA) lie on the Cytoplasmic side of the membrane. Residues 421–441 (AAFGGLCIGGLSVMADFLGAI) form a helical membrane-spanning segment. Residues 442 to 445 (GSGT) lie on the Lumenal side of the membrane. A helical membrane pass occupies residues 446–462 (GILLAVTIIYQYFEIFV). Topologically, residues 463-476 (KEQSEMGSMGALLF) are cytoplasmic.

Belongs to the SecY/SEC61-alpha family. In terms of assembly, the SEC61 channel-forming translocon complex consists of channel-forming core components SEC61A1, SEC61B and SEC61G and different auxiliary components such as SEC62 and SEC63. The SEC61 channel associates with the multi-pass translocon (MPT) complex.

The protein resides in the endoplasmic reticulum membrane. Its function is as follows. Component of SEC61 channel-forming translocon complex that mediates transport of signal peptide-containing precursor polypeptides across the endoplasmic reticulum (ER). Forms a ribosome receptor and a gated pore in the ER membrane, both functions required for cotranslational translocation of nascent polypeptides. May cooperate with auxiliary protein SEC62, SEC63 and HSPA5/BiP to enable post-translational transport of small presecretory proteins. The SEC61 channel is also involved in ER membrane insertion of transmembrane proteins: it mediates membrane insertion of the first few transmembrane segments of proteins, while insertion of subsequent transmembrane regions of multi-pass membrane proteins is mediated by the multi-pass translocon (MPT) complex. The sequence is that of Protein transport protein Sec61 subunit alpha (sec61a) from Gadus ogac (Greenland cod).